The sequence spans 289 residues: tRNA(Ile)-lysidine synthase (289 aa).

11-16 (SGGPDS) provides a ligand contact to ATP.

Belongs to the tRNA(Ile)-lysidine synthase family.

It is found in the cytoplasm. It carries out the reaction cytidine(34) in tRNA(Ile2) + L-lysine + ATP = lysidine(34) in tRNA(Ile2) + AMP + diphosphate + H(+). Ligates lysine onto the cytidine present at position 34 of the AUA codon-specific tRNA(Ile) that contains the anticodon CAU, in an ATP-dependent manner. Cytidine is converted to lysidine, thus changing the amino acid specificity of the tRNA from methionine to isoleucine. In Mycoplasma pneumoniae (strain ATCC 29342 / M129 / Subtype 1) (Mycoplasmoides pneumoniae), this protein is tRNA(Ile)-lysidine synthase.